The following is a 375-amino-acid chain: Filamin-binding LIM protein 1 (375 aa).

A filamin-binding region spans residues 1–69 (MASKPEKRVA…KTWTPSGKTN (69 aa)). The disordered stretch occupies residues 40 to 176 (ARPWEMLPTK…PPPEEPVTLP (137 aa)). Over residues 60 to 83 (KTWTPSGKTNASLSGVTPQLSNGG) the composition is skewed to polar residues. 2 stretches are compositionally biased toward pro residues: residues 98-107 (LPPPPPPPSA) and 133-144 (LPPPPPPPPPQA). LIM zinc-binding domains follow at residues 183-244 (DVCG…TLEK), 245-302 (CGKC…RKFA), and 303-372 (PVCS…RSAA). The segment at 278 to 375 (ISDESFALDS…HLKRSAAGCC (98 aa)) is FERMT2-binding.

In terms of assembly, interacts with FERMT2, FLNA, FLNB and FLNC. Interacts with NKX2-5.

The protein resides in the cell junction. It localises to the focal adhesion. The protein localises to the cytoplasm. Its subcellular location is the cytoskeleton. It is found in the stress fiber. Serves as an anchoring site for cell-ECM adhesion proteins and filamin-containing actin filaments. Is implicated in cell shape modulation (spreading) and motility. May participate in the regulation of filamin-mediated cross-linking and stabilization of actin filaments. May also regulate the assembly of filamin-containing signaling complexes that control actin assembly. Promotes dissociation of FLNA from ITGB3 and ITGB7. Promotes activation of integrins and regulates integrin-mediated cell-cell adhesion. This Mus musculus (Mouse) protein is Filamin-binding LIM protein 1 (Fblim1).